The primary structure comprises 430 residues: Adenylosuccinate synthetase (430 aa).

Residues 12 to 18 (GDEGKGK) and 40 to 42 (GHT) contribute to the GTP site. Asp-13 (proton acceptor) is an active-site residue. Mg(2+)-binding residues include Asp-13 and Gly-40. Residues 13 to 16 (DEGK), 38 to 41 (NAGH), Thr-130, Arg-144, Gln-224, and Thr-239 each bind IMP. Residue His-41 is the Proton donor of the active site. The disordered stretch occupies residues 277-298 (PFPTEQDNETGRKIGERGREFG). The span at 285 to 296 (ETGRKIGERGRE) shows a compositional bias: basic and acidic residues. 299-305 (TNTGRPR) provides a ligand contact to substrate. Residue Arg-303 participates in IMP binding. GTP contacts are provided by residues Arg-305, 331-333 (KLD), and 413-415 (STS).

Belongs to the adenylosuccinate synthetase family. In terms of assembly, homodimer. Mg(2+) serves as cofactor.

The protein localises to the cytoplasm. It catalyses the reaction IMP + L-aspartate + GTP = N(6)-(1,2-dicarboxyethyl)-AMP + GDP + phosphate + 2 H(+). Its pathway is purine metabolism; AMP biosynthesis via de novo pathway; AMP from IMP: step 1/2. In terms of biological role, plays an important role in the de novo pathway of purine nucleotide biosynthesis. Catalyzes the first committed step in the biosynthesis of AMP from IMP. This Bradyrhizobium sp. (strain BTAi1 / ATCC BAA-1182) protein is Adenylosuccinate synthetase.